Here is a 723-residue protein sequence, read N- to C-terminus: Catalase-peroxidase (723 aa).

Residues 1 to 29 form the signal peptide; it reads MDGNDLVENKCPVMHGGITVAGHSNTAWW. The tryptophyl-tyrosyl-methioninium (Trp-Tyr) (with M-251) cross-link spans 97-225; it reads WHSAGSYRLA…LAAVQMGLIY (129 aa). The Proton acceptor role is filled by His98. The tryptophyl-tyrosyl-methioninium (Tyr-Met) (with W-97) cross-link spans 225 to 251; the sequence is YVNPEGVNGKSDPLKSAAQVRETFARM. Residue His266 coordinates heme b.

The protein belongs to the peroxidase family. Peroxidase/catalase subfamily. As to quaternary structure, homodimer or homotetramer. It depends on heme b as a cofactor. In terms of processing, formation of the three residue Trp-Tyr-Met cross-link is important for the catalase, but not the peroxidase activity of the enzyme.

It carries out the reaction H2O2 + AH2 = A + 2 H2O. The enzyme catalyses 2 H2O2 = O2 + 2 H2O. In terms of biological role, bifunctional enzyme with both catalase and broad-spectrum peroxidase activity. The polypeptide is Catalase-peroxidase (Hyphomonas neptunium (strain ATCC 15444)).